Reading from the N-terminus, the 394-residue chain is RNA-binding motif protein, X-linked-like-2 (394 aa).

The RRM domain maps to Gly8 to Lys86. Residues Arg67–Ala78 show a composition bias toward basic and acidic residues. The segment at Arg67 to Tyr394 is disordered. Residues Arg150–Arg165 show a composition bias toward pro residues. 2 stretches are compositionally biased toward basic and acidic residues: residues Pro196–Arg231 and Glu239–Phe285. The segment covering Tyr321 to Gly333 has biased composition (low complexity). 2 stretches are compositionally biased toward basic and acidic residues: residues Arg334–Arg350 and Gly383–Tyr394.

The protein resides in the nucleus. The polypeptide is RNA-binding motif protein, X-linked-like-2 (RBMXL2) (Macaca fascicularis (Crab-eating macaque)).